The primary structure comprises 1507 residues: MTTNGADPLGRFSALTREWFTTAFAAPTPAQADAWSAISEGNNTLVIAPTGSGKTLAAFLWAIDRLADPAREPSQGTQVLYVSPLKALAVDVERNLRTPLTGITRVAERHGLPAPSITVGVRSGDTPPNQRRAMIANPPDVLITTPESLFLMLTSAARETLTSVRTVIVDEVHAVAATKRGAHLALSLERLDQLLDTPAQRIGLSATVRPPEEVARFLSGQAPTTIVCPPAAKTFDLSVQVPVPDMANLDNNSIWPDVEERIVDLVEAHNSSIVFANSRRLAERLTSRLNEIHAERSGIELPAGPNPEVGGGAPAHLMGSGQANGAPPLLARAHHGSVSKEQRAQVEDDLKSGRLRAVVATSSLELGIDMGAVDLVIQVEAPPSVASGLQRVGRAGHQVGEISQGVLFPKHRTDLIGCAVTVQRMQTGDIETLRVPANPLDVLAQHTVAVAALEPVDADAWFDAVRRSAPFATLPRSAFEATLDLLSGKYPSTEFAELRPRLVYDRDTGTLTARPGAQRLAVTSGGAIPDRGMFTVYLASETEKPSRVGELDEEMVYESRPGDVISLGATSWRITEITHDRVLVIPAPGQPARLPFWRGDSVGRPAELGAAVGAFTGELASLDRKAFDKRCQKMGFAGYATDNLHQLLREQREATGVVPSDTTFVVERFRDELGDWRVILHSPYGLRVHGPLALAVGRRLRERYGIDEKPTASDDGIIVRLPDSGDTPPGADLFVFDADEIEPIVTAEVGGSALFASRFRECAARALLLPRRHPGKRSPLWHQRQRAAQLLDIARKYPDFPIVLEAVRECLQDVYDVPALIELMHKIAQRRLRIVEVETATPSPFAASLLFGYVGAFMYEGDSPLAERRAAALALDTVLLSELLGRVELRELLDPAVVASTSAQLQHLTPERAARDAEGVADLLRLLGPLTEADIAQRCTADNIGAWLDGLHAAKRALPVTYAGQTWWAAVEDIGLLRDGIGVPVPVGVPAAFTESASDPLGDLIGRYARTRGPFTTEQTAARFGLGVRVASDVLSRMAVDGRLIRGEFAADLSGEQWCDAQVLKILRRRSLAALRAQVEPVSTDAYARFLPSWQHVGSTNTTGIDGLATVIEQLAGVPIPASAVESLVFPQRVRDYQPAMLDELLASGEVMWSGAGQIGNGDGWVAFHLADTAPLTLTHGAEIEFTDTHRVILETLGHGGAYFFRQLTDGTVEGTAGQELKQALWELIWAGWVTGDTFAPVRAVLSGPRRSGAPAHRQRQRPPRLSRYSVAHAQTRGTDPTVSGRWSALPAAEPDSTVRAHFQAELLLGRHGVLTKGAVGAEGVPGGFATLYKVLSTFEDAGRCQRGYFVESLGGAQFAVASTVDRLRSYLDNVDPERPEYHAVVLAATDPANPYGAALGWPTDSEAHRPGRKAGALVALVDGRLVWFLERGGRSLLSFGADADAQRAAAGALTDLVSAGRIPSLLVERINGVAVLDPDVDAERAVVQDALLGAGLSRTPRGLRLR.

The lhr-Core stretch occupies residues 1–856 (MTTNGADPLG…ASLLFGYVGA (856 aa)). Residues Phe24, Gln31, Lys54, and Thr55 each contribute to the ATP site. The 192-residue stretch at 35-226 (WSAISEGNNT…FLSGQAPTTI (192 aa)) folds into the Helicase ATP-binding domain. SsDNA-binding residues include Arg122, Arg131, Thr145, Ser148, and Met152. ATP is bound by residues Asp170 and Glu171. The DEAH box motif lies at 170–173 (DEVH). Residues Ser253, Trp255, and Arg279 each coordinate ssDNA. Positions 257-451 (DVEERIVDLV…VLAQHTVAVA (195 aa)) constitute a Helicase C-terminal domain. Residues Ile377, Arg394, and His397 each contribute to the ATP site. SsDNA is bound by residues Lys410, Gln518, Arg519, Ile528, Trp597, Asp600, and Arg777. A WH domain region spans residues 436–529 (PANPLDVLAQ…LAVTSGGAIP (94 aa)). Positions 530–856 (DRGMFTVYLA…ASLLFGYVGA (327 aa)) are domain 4. The segment at 857 to 1507 (FMYEGDSPLA…SRTPRGLRLR (651 aa)) is CTD.

Belongs to the Lhr helicase family. In terms of assembly, monomer. Homooligomerizes, possibly a homotetramer. It depends on Ca(2+) as a cofactor.

It carries out the reaction Couples ATP hydrolysis with the unwinding of duplex DNA by translocating in the 3'-5' direction.. The catalysed reaction is ATP + H2O = ADP + phosphate + H(+). It catalyses the reaction Hydrolyzes single-stranded DNA or mismatched double-stranded DNA and polynucleotides, releasing free uracil.. Functionally, a 3'-5' helicase involved in repair of at least 3 types of DNA cross-links, mitomycin C (MMC), cisplatin, and psoralen-UVA. Translocates 3'-to-5' on single-stranded (ss)DNA, unwinding any encountered duplex nucleic acid. A 3'-ssDNA loading strand of at least 15 nucleotides is required for helicase activity. An RNA:DNA hybrid with a 3'-ssDNA loading strand is an 8-fold better helicase substrate than 3'-tailed double-stranded (ds)DNA; substrates where the helicase loads on a 3'-ssRNA tail (DNA:RNA and RNA:RNA) are not unwound. Only (d)ATP is hydrolyzed by the protein, which has no ATPase activity in the absence of ssDNA or ssRNA. Arg-279 and Trp-597 are needed to couple ATP hydrolysis to mechanical work; a salt bridge between Arg-280 and Glu-550 closes a clamp around the ssDNA that is not large enough for dsDNA, while Ile-528 wedges between bases of the loading strand. Excises uracil residues from ssDNA. Uracil residues in DNA can arise as a result of misincorporation of dUMP residues by DNA polymerase or due to deamination of cytosine. This Mycolicibacterium smegmatis (strain ATCC 700084 / mc(2)155) (Mycobacterium smegmatis) protein is Lhr helicase/ probable uracil glycosylase.